The following is a 259-amino-acid chain: Putative cysteine-rich repeat secretory protein 25 (259 aa).

The N-terminal stretch at 1–31 (MSSSFLSRPLVSVYVFAMVTMQLLFMQSVLS) is a signal peptide. Gnk2-homologous domains are found at residues 37–138 (AYLN…SIYT) and 144–256 (YRHI…LYPF).

The protein belongs to the cysteine-rich repeat secretory protein family.

Its subcellular location is the secreted. This is Putative cysteine-rich repeat secretory protein 25 (CRRSP25) from Arabidopsis thaliana (Mouse-ear cress).